Consider the following 145-residue polypeptide: Large-conductance mechanosensitive channel (145 aa).

A run of 3 helical transmembrane segments spans residues 14–34, 38–58, and 81–101; these read VMDL…VKSL, LIMP…YFLP, and GSFL…FLMV.

Belongs to the MscL family. As to quaternary structure, homopentamer.

It is found in the cell inner membrane. Channel that opens in response to stretch forces in the membrane lipid bilayer. May participate in the regulation of osmotic pressure changes within the cell. The protein is Large-conductance mechanosensitive channel of Rhizobium johnstonii (strain DSM 114642 / LMG 32736 / 3841) (Rhizobium leguminosarum bv. viciae).